Reading from the N-terminus, the 153-residue chain is Acetylacetone-cleaving enzyme (153 aa).

As to quaternary structure, homotetramer. It depends on Fe cation as a cofactor.

The catalysed reaction is acetylacetone + O2 = methylglyoxal + acetate + H(+). Its pathway is xenobiotic degradation; acetylacetone degradation. Functionally, cleaves acetylacetone to equimolar amounts of methylglyoxal and acetate, consuming one equivalent of molecular oxygen. This Acinetobacter johnsonii protein is Acetylacetone-cleaving enzyme (dke1).